The primary structure comprises 104 residues: Iron-sulfur cluster assembly protein CyaY (104 aa).

It belongs to the frataxin family.

Involved in iron-sulfur (Fe-S) cluster assembly. May act as a regulator of Fe-S biogenesis. This Vibrio atlanticus (strain LGP32) (Vibrio splendidus (strain Mel32)) protein is Iron-sulfur cluster assembly protein CyaY.